The sequence spans 1383 residues: Spike glycoprotein (1383 aa).

The first 25 residues, 1–25 (MRSLIYFWLLLPVLPTLSLPQDVTR), serve as a signal peptide directing secretion. Residues 26-734 (CQSTTNFRRF…TRELPGFFYH (709 aa)) are S1. Residues 26–1324 (CQSTTNFRRF…NRVETYIKWP (1299 aa)) are Virion surface-facing. The segment at 617-745 (FQFTKGELIT…NDGSNCTEPV (129 aa)) is interaction with host ANPEP. An S2 region spans residues 735 to 1383 (SNDGSNCTEP…YEAFEKVHVQ (649 aa)). Positions 955–975 (IGGMALGGITAAAALPFSYAV) are fusion peptide. The interval 969-1088 (LPFSYAVQAR…QVDRLITGRL (120 aa)) is heptad repeat 1 (HR1). Coiled-coil stretches lie at residues 1036–1080 (QEVV…DVQV) and 1272–1314 (TYLN…LEWL). The heptad repeat 2 (HR2) stretch occupies residues 1240–1336 (PDYIDVNKTL…VWLIIVIVLI (97 aa)). The chain crosses the membrane as a helical span at residues 1325–1344 (WWVWLIIVIVLIFVVSLLVF). The Intravirion portion of the chain corresponds to 1345-1383 (CCISTGCCGCCGCCGACFSGCCRGPRLQPYEAFEKVHVQ). Residues 1379 to 1383 (KVHVQ) carry the KxHxx motif.

The protein belongs to the alphacoronaviruses spike protein family. Homotrimer. During virus morphogenesis, found in a complex with M and HE proteins. Interacts with host ANPEP.

The protein localises to the virion membrane. It is found in the host endoplasmic reticulum-Golgi intermediate compartment membrane. S1 region attaches the virion to the cell membrane by interacting with host ANPEP/aminopeptidase N, initiating the infection. Binding to the receptor probably induces conformational changes in the S glycoprotein unmasking the fusion peptide of S2 region and activating membranes fusion. S2 region belongs to the class I viral fusion protein. Under the current model, the protein has at least 3 conformational states: pre-fusion native state, pre-hairpin intermediate state, and post-fusion hairpin state. During viral and target cell membrane fusion, the coiled coil regions (heptad repeats) regions assume a trimer-of-hairpins structure, positioning the fusion peptide in close proximity to the C-terminal region of the ectodomain. The formation of this structure appears to drive apposition and subsequent fusion of viral and target cell membranes. The sequence is that of Spike glycoprotein from Porcine epidemic diarrhea virus (strain CV777) (PEDV).